The sequence spans 217 residues: Large ribosomal subunit protein bL21m (217 aa).

Over residues 61 to 81 the composition is skewed to low complexity; sequence PPKVTTATTPEAPAAVPTSTP. The disordered stretch occupies residues 61–87; that stretch reads PPKVTTATTPEAPAAVPTSTPFSQQPP.

Belongs to the bacterial ribosomal protein bL21 family. As to quaternary structure, component of the mitochondrial large ribosomal subunit (mt-LSU). Mature N.crassa 74S mitochondrial ribosomes consist of a small (37S) and a large (54S) subunit. The 37S small subunit contains a 16S ribosomal RNA (16S mt-rRNA) and 32 different proteins. The 54S large subunit contains a 23S rRNA (23S mt-rRNA) and 42 different proteins.

The protein resides in the mitochondrion. In terms of biological role, component of the mitochondrial ribosome (mitoribosome), a dedicated translation machinery responsible for the synthesis of mitochondrial genome-encoded proteins, including at least some of the essential transmembrane subunits of the mitochondrial respiratory chain. The mitoribosomes are attached to the mitochondrial inner membrane and translation products are cotranslationally integrated into the membrane. In Neurospora crassa (strain ATCC 24698 / 74-OR23-1A / CBS 708.71 / DSM 1257 / FGSC 987), this protein is Large ribosomal subunit protein bL21m (mrpl49).